The sequence spans 209 residues: 7-carboxy-7-deazaguanine synthase (209 aa).

Residues 10–12 (IQG) and arginine 25 each bind substrate. A Radical SAM core domain is found at 16–205 (YAGLPMLFVR…PQIHKIIYGD (190 aa)). [4Fe-4S] cluster is bound by residues cysteine 29, cysteine 33, and cysteine 36. Threonine 38 contributes to the Mg(2+) binding site. Threonine 68 is a binding site for substrate. Glycine 70 contacts S-adenosyl-L-methionine.

Belongs to the radical SAM superfamily. 7-carboxy-7-deazaguanine synthase family. Homodimer. It depends on [4Fe-4S] cluster as a cofactor. The cofactor is S-adenosyl-L-methionine. Requires Mg(2+) as cofactor.

It catalyses the reaction 6-carboxy-5,6,7,8-tetrahydropterin + H(+) = 7-carboxy-7-deazaguanine + NH4(+). The protein operates within purine metabolism; 7-cyano-7-deazaguanine biosynthesis. Functionally, catalyzes the complex heterocyclic radical-mediated conversion of 6-carboxy-5,6,7,8-tetrahydropterin (CPH4) to 7-carboxy-7-deazaguanine (CDG), a step common to the biosynthetic pathways of all 7-deazapurine-containing compounds. This is 7-carboxy-7-deazaguanine synthase from Thermoplasma acidophilum (strain ATCC 25905 / DSM 1728 / JCM 9062 / NBRC 15155 / AMRC-C165).